The primary structure comprises 398 residues: DNA-directed RNA polymerase III subunit RPC4 (398 aa).

The segment at 1–149 (MSEGNAAGEP…IKKEKRETDE (149 aa)) is disordered. Residue serine 2 is modified to N-acetylserine. A Phosphoserine modification is found at serine 42. 3 stretches are compositionally biased toward basic and acidic residues: residues 66–100 (KIKE…RGRP), 116–128 (MMKK…KTVD), and 140–149 (IKKEKRETDE). Glycyl lysine isopeptide (Lys-Gly) (interchain with G-Cter in SUMO2) cross-links involve residues lysine 68 and lysine 78. An omega-N-methylarginine mark is found at arginine 95, arginine 97, and arginine 99. Residues lysine 141, lysine 152, lysine 160, lysine 190, lysine 199, lysine 206, lysine 220, lysine 285, lysine 302, and lysine 396 each participate in a glycyl lysine isopeptide (Lys-Gly) (interchain with G-Cter in SUMO2) cross-link. Positions 191–244 (EESEEPEAKPFSAGPKEEDMEVDVPAVKVKEEPRDEEEEAKVKAPPRAARKTPG) are disordered.

Belongs to the eukaryotic RPC4/POLR3D RNA polymerase subunit family. As to quaternary structure, component of the RNA polymerase III complex consisting of 17 subunits: a ten-subunit horseshoe-shaped catalytic core composed of POLR3A/RPC1, POLR3B/RPC2, POLR1C/RPAC1, POLR1D/RPAC2, POLR3K/RPC10, POLR2E/RPABC1, POLR2F/RPABC2, POLR2H/RPABC3, POLR2K/RPABC4 and POLR2L/RPABC5; a mobile stalk composed of two subunits POLR3H/RPC8 and CRCP/RPC9, protruding from the core and functioning primarily in transcription initiation; and additional subunits homologous to general transcription factors of the RNA polymerase II machinery, POLR3C/RPC3-POLR3F/RPC6-POLR3G/RPC7 heterotrimer required for transcription initiation and POLR3D/RPC4-POLR3E/RPC5 heterodimer involved in both transcription initiation and termination. Post-translationally, sumoylation on Lys-141 can serve as a signal to mark misfolded Pol III for proteasomal degradation.

It is found in the nucleus. Functionally, DNA-dependent RNA polymerase catalyzes the transcription of DNA into RNA using the four ribonucleoside triphosphates as substrates. Specific peripheric component of RNA polymerase III (Pol III) which synthesizes small non-coding RNAs including 5S rRNA, snRNAs, tRNAs and miRNAs from at least 500 distinct genomic loci. Enables recruitment of Pol III at transcription initiation site and drives transcription initiation from both type 2 and type 3 DNA promoters. Required for efficient transcription termination and reinitiation. Pol III plays a key role in sensing and limiting infection by intracellular bacteria and DNA viruses. Acts as nuclear and cytosolic DNA sensor involved in innate immune response. Can sense non-self dsDNA that serves as template for transcription into dsRNA. The non-self RNA polymerase III transcripts, such as Epstein-Barr virus-encoded RNAs (EBERs) induce type I interferon and NF-kappa-B through the RIG-I pathway. The sequence is that of DNA-directed RNA polymerase III subunit RPC4 from Mus musculus (Mouse).